Here is a 2430-residue protein sequence, read N- to C-terminus: Transcription factor HIVEP2 (2430 aa).

The interval 1 to 127 (MDTGDTALGQ…SLEGPPWLFP (127 aa)) is disordered. Polar residues-rich tracts occupy residues 11–22 (KATSRSGETDSV) and 96–110 (HSLSFPQHSLSQGMT). 2 C2H2-type zinc fingers span residues 189–211 (YICPYCSRACAKPSVLKKHIRSH) and 217–239 (YPCIPCGFSFKTKSNLYKHRKSH). Disordered regions lie at residues 271-302 (IHSDGEQSTDTDEESSLFAEASDKVSPGPPVP), 374-418 (SEKK…NTNA), and 744-995 (AHGH…SGKH). The span at 381-418 (SEPSLNLLSPHSKGSTDSGYFSRSESAEQQISPPNTNA) shows a compositional bias: polar residues. 2 stretches are compositionally biased toward basic and acidic residues: residues 744 to 753 (AHGHSDRLDP) and 775 to 784 (DPDKMTDLGK). Positions 792–804 (SVIQHTNSLSRPN) are enriched in polar residues. Ser-811 carries the post-translational modification Phosphoserine. Residues 853–863 (SKPTPSQQVPQ) show a composition bias toward polar residues. The span at 884–908 (RVTEEPDKPEKEKEAPTKEPEKPVE) shows a compositional bias: basic and acidic residues. The Nuclear localization signal signature appears at 929–935 (PKKKRLR). Phosphoserine is present on residues Ser-942, Ser-947, Ser-1040, Ser-1431, and Ser-1435. Over residues 944–974 (GESSFESTGTGLSRSPSQESNLSHSSSFSMS) the composition is skewed to low complexity. Positions 1472–1584 (KKGLSRPQKP…GGQQEEEGKA (113 aa)) are disordered. Composition is skewed to low complexity over residues 1499 to 1520 (SRSSSFSSLSPSSSQDHPSASG) and 1560 to 1569 (SDMSMSPQSS). 2 C2H2-type zinc fingers span residues 1783–1805 (YICEECGIRCKKPSMLKKHIRTH) and 1811–1835 (YVCKLCNFAFKTKGNLTKHMKSKAH). Disordered regions lie at residues 1848–1931 (SVDD…SSLP) and 1986–2117 (FQSK…SPRR). The span at 1850–1860 (DDTETEEAENM) shows a compositional bias: acidic residues. Residues 1861–1871 (EELHKTSEKHS) are compositionally biased toward basic and acidic residues. Over residues 1883–1909 (DAEESDGEDGDDNDDDDEDDDDFDDQG) the composition is skewed to acidic residues. The segment covering 1991–2001 (TDSEPDKDRLD) has biased composition (basic and acidic residues). The segment covering 2013-2037 (SSEPSSSPRDFSPSSYRSSPGYDSS) has biased composition (low complexity). 10 tandem repeats follow at residues 2037-2040 (SPCR), 2043-2046 (SPKR), 2055-2058 (SPRR), 2067-2070 (SPMR), 2073-2076 (SPRK), 2090-2093 (SPRR), 2096-2099 (SPRR), 2102-2105 (SPGK), 2114-2117 (SPRR), and 2129-2132 (SPRR). The tract at residues 2037–2132 (SPCRDNSPKR…TTIRAPSPRR (96 aa)) is 10 X 4 AA tandem repeats of S-P-[RGMKC]-[RK]. The segment covering 2062–2085 (PRRDLSPMRHLSPRKEAALRREMS) has biased composition (basic and acidic residues). The residue at position 2102 (Ser-2102) is a Phosphoserine. The span at 2107 to 2116 (ITARRDLSPR) shows a compositional bias: basic and acidic residues. Disordered regions lie at residues 2226–2252 (PALSGLHPPPTLPLPTEGSEEKKGAPG), 2268–2309 (KQAP…QEEN), and 2352–2430 (SIRH…NQLH). Over residues 2271 to 2289 (PQVLQSSGLPSSPSSPRLL) the composition is skewed to low complexity. Phosphoserine occurs at positions 2281 and 2285. Over residues 2291 to 2301 (KQSTSEDSLNS) the composition is skewed to polar residues. Over residues 2371 to 2380 (PDLHDGEKDT) the composition is skewed to basic and acidic residues. Over residues 2406 to 2417 (FQSSKELSLSTE) the composition is skewed to polar residues. Residues Ser-2413 and Ser-2415 each carry the phosphoserine modification.

In terms of assembly, interacts with TCF4. As to expression, expressed in heart, lung, skeletal muscle and liver. In the brain expressed in cerebral cortex, hippocampus, corpora amygdala and cerebellar cortex.

Its subcellular location is the nucleus. Functionally, specifically binds to the DNA sequence 5'-GGGACTTTCC-3' which is found in the enhancer elements of numerous viral promoters such as those of SV40, CMV, or HIV1. In addition, related sequences are found in the enhancer elements of a number of cellular promoters, including those of the class I MHC, interleukin-2 receptor, somatostatin receptor II, and interferon-beta genes. It may act in T-cell activation. The chain is Transcription factor HIVEP2 (Hivep2) from Mus musculus (Mouse).